We begin with the raw amino-acid sequence, 422 residues long: Zinc-regulated transporter 2 (422 aa).

The Extracellular segment spans residues 1–27; the sequence is MVDLIARDDSVDTCQASNGYNGHAGLR. Residues 28–48 form a helical membrane-spanning segment; it reads ILAVFIILISSGLGVYFPILS. Over 49 to 60 the chain is Cytoplasmic; the sequence is SRYSFIRLPNWC. A helical membrane pass occupies residues 61–81; the sequence is FFIAKFFGSGVIVATAFVHLL. Topologically, residues 82–99 are extracellular; it reads QPAAEALGDECLGGTFAE. The chain crosses the membrane as a helical span at residues 100–120; it reads YPWAFGICLMSLFLLFFTEII. Residues 121 to 262 lie on the Cytoplasmic side of the membrane; sequence THYFVAKTLG…EEDKEQYLNQ (142 aa). Phosphoserine occurs at positions 148, 149, 162, and 170. Thr188 is modified (phosphothreonine). The helical transmembrane segment at 263 to 283 threads the bilayer; sequence ILAVFILEFGIIFHSVFVGLS. Over 284–290 the chain is Extracellular; it reads LSVAGEE. Residues 291 to 311 form a helical membrane-spanning segment; that stretch reads FETLFIVLTFHQMFEGLGLGT. Over 312–326 the chain is Cytoplasmic; the sequence is RVAETNWPESKKYMP. The chain crosses the membrane as a helical span at residues 327 to 347; the sequence is WLMGLAFTLTSPIAVAVGIGV. The Extracellular segment spans residues 348 to 358; sequence RHSWIPGSRRA. A helical transmembrane segment spans residues 359-379; that stretch reads LIANGVFDSISSGILIYTGLV. The Cytoplasmic portion of the chain corresponds to 380 to 400; that stretch reads ELMAHEFLYSNQFKGPDGLKK. Residues 401–421 form a helical membrane-spanning segment; sequence MLSAYLIMCCGAALMALLGKW. Ala422 is a topological domain (extracellular).

Belongs to the ZIP transporter (TC 2.A.5) family.

The protein localises to the membrane. Functionally, low-affinity zinc transport protein. Active in zinc-replete cells and is time-, temperature- and concentration-dependent and prefers zinc over other metals as its substrate. This Saccharomyces cerevisiae (strain ATCC 204508 / S288c) (Baker's yeast) protein is Zinc-regulated transporter 2 (ZRT2).